Consider the following 372-residue polypeptide: N-methyl-L-tryptophan oxidase (372 aa).

4–34 (DLIIIGSGSVGAAAGYYATRAGLNVLMTDAH) serves as a coordination point for FAD. Residue C308 is modified to S-8alpha-FAD cysteine.

This sequence belongs to the MSOX/MTOX family. MTOX subfamily. Monomer. FAD is required as a cofactor.

It catalyses the reaction N(alpha)-methyl-L-tryptophan + O2 + H2O = L-tryptophan + formaldehyde + H2O2. Its function is as follows. Catalyzes the oxidative demethylation of N-methyl-L-tryptophan. The sequence is that of N-methyl-L-tryptophan oxidase from Shigella flexneri serotype 5b (strain 8401).